We begin with the raw amino-acid sequence, 135 residues long: Centromere protein S (135 aa).

The interval 103–135 (SLEQKEKKKKKSVSGGNVSRNSDMDTVVPESKD) is disordered.

The protein belongs to the TAF9 family. CENP-S/MHF1 subfamily. In terms of assembly, heterodimer with CENPX, sometimes called MHF; this interaction stabilizes both partners. MHF heterodimers can assemble to form tetrameric structures. MHF also coassemble with CENPT-CENPW heterodimers at centromeres to form the tetrameric CENP-T-W-S-X complex. Forms a discrete complex with FANCM and CENPX, called FANCM-MHF; this interaction, probably mediated by direct binding between CENPS and FANCM, leads to synergistic activation of double-stranded DNA binding and strongly stimulates FANCM-mediated DNA remodeling. Recruited by FANCM to the Fanconi anemia (FA) core complex, which consists of CENPS, CENPX, FANCA, FANCB, FANCC, FANCE, FANCF, FANCG, FANCL, FANCM, FAAP24 and FAAP100. The FA core complex associates with Bloom syndrome (BLM) complex, which consists of at least BLM, DNA topoisomerase 3-alpha (TOP3A), RMI1/BLAP75, RPA1/RPA70 and RPA2/RPA32. The super complex between FA and BLM is called BRAFT. Component of the CENPA-CAD complex, composed of CENPI, CENPK, CENPL, CENPO, CENPP, CENPQ, CENPR and CENPS. The CENPA-CAD complex is probably recruited on centromeres by the CENPA-NAC complex, at least composed of CENPA, CENPC, CENPH, CENPM, CENPN, CENPT and CENPU.

The protein resides in the nucleus. It localises to the chromosome. The protein localises to the centromere. Its subcellular location is the kinetochore. Its function is as follows. DNA-binding component of the Fanconi anemia (FA) core complex. Required for the normal activation of the FA pathway, leading to monoubiquitination of the FANCI-FANCD2 complex in response to DNA damage, cellular resistance to DNA cross-linking drugs, and prevention of chromosomal breakage. In complex with CENPX (MHF heterodimer), crucial cofactor for FANCM in both binding and ATP-dependent remodeling of DNA. Stabilizes FANCM. In complex with CENPX and FANCM (but not other FANC proteins), rapidly recruited to blocked forks and promotes gene conversion at blocked replication forks. In complex with CENPT, CENPW and CENPX (CENP-T-W-S-X heterotetramer), involved in the formation of a functional kinetochore outer plate, which is essential for kinetochore-microtubule attachment and faithful mitotic progression. As a component of MHF and CENP-T-W-S-X complexes, binds DNA and bends it to form a nucleosome-like structure. DNA-binding function is fulfilled in the presence of CENPX, with the following preference for DNA substates: Holliday junction &gt; double-stranded &gt; splay arm &gt; single-stranded. Does not bind DNA on its own. This chain is Centromere protein S (cenps), found in Xenopus laevis (African clawed frog).